The primary structure comprises 512 residues: ATP synthase subunit alpha (512 aa).

169 to 176 (GDRQTGKT) contacts ATP.

Belongs to the ATPase alpha/beta chains family. As to quaternary structure, F-type ATPases have 2 components, CF(1) - the catalytic core - and CF(0) - the membrane proton channel. CF(1) has five subunits: alpha(3), beta(3), gamma(1), delta(1), epsilon(1). CF(0) has four main subunits: a(1), b(1), b'(1) and c(9-12).

The protein localises to the cell inner membrane. The enzyme catalyses ATP + H2O + 4 H(+)(in) = ADP + phosphate + 5 H(+)(out). Functionally, produces ATP from ADP in the presence of a proton gradient across the membrane. The alpha chain is a regulatory subunit. This Cereibacter sphaeroides (strain ATCC 17025 / ATH 2.4.3) (Rhodobacter sphaeroides) protein is ATP synthase subunit alpha.